Reading from the N-terminus, the 235-residue chain is tRNA (guanine-N(1)-)-methyltransferase (235 aa).

S-adenosyl-L-methionine contacts are provided by residues G112 and 132-137; that span reads LGDFVL.

It belongs to the RNA methyltransferase TrmD family. In terms of assembly, homodimer.

The protein resides in the cytoplasm. It catalyses the reaction guanosine(37) in tRNA + S-adenosyl-L-methionine = N(1)-methylguanosine(37) in tRNA + S-adenosyl-L-homocysteine + H(+). Specifically methylates guanosine-37 in various tRNAs. This chain is tRNA (guanine-N(1)-)-methyltransferase, found in Acaryochloris marina (strain MBIC 11017).